We begin with the raw amino-acid sequence, 334 residues long: Holliday junction branch migration complex subunit RuvB (334 aa).

The large ATPase domain (RuvB-L) stretch occupies residues 4–184 (ADRLIQPQLQ…FGIPLRLEFY (181 aa)). ATP-binding positions include R24, G65, K68, T69, T70, 131 to 133 (EDY), R174, Y184, and R221. T69 provides a ligand contact to Mg(2+). Residues 185 to 255 (NVKDLSTIVT…VAEHALDLLD (71 aa)) are small ATPAse domain (RuvB-S). Residues 258–334 (GEGFDYMDRK…YLHFGMIKPE (77 aa)) form a head domain (RuvB-H) region. DNA-binding residues include R294, R313, and R318.

It belongs to the RuvB family. As to quaternary structure, homohexamer. Forms an RuvA(8)-RuvB(12)-Holliday junction (HJ) complex. HJ DNA is sandwiched between 2 RuvA tetramers; dsDNA enters through RuvA and exits via RuvB. An RuvB hexamer assembles on each DNA strand where it exits the tetramer. Each RuvB hexamer is contacted by two RuvA subunits (via domain III) on 2 adjacent RuvB subunits; this complex drives branch migration. In the full resolvosome a probable DNA-RuvA(4)-RuvB(12)-RuvC(2) complex forms which resolves the HJ.

It is found in the cytoplasm. The catalysed reaction is ATP + H2O = ADP + phosphate + H(+). The RuvA-RuvB-RuvC complex processes Holliday junction (HJ) DNA during genetic recombination and DNA repair, while the RuvA-RuvB complex plays an important role in the rescue of blocked DNA replication forks via replication fork reversal (RFR). RuvA specifically binds to HJ cruciform DNA, conferring on it an open structure. The RuvB hexamer acts as an ATP-dependent pump, pulling dsDNA into and through the RuvAB complex. RuvB forms 2 homohexamers on either side of HJ DNA bound by 1 or 2 RuvA tetramers; 4 subunits per hexamer contact DNA at a time. Coordinated motions by a converter formed by DNA-disengaged RuvB subunits stimulates ATP hydrolysis and nucleotide exchange. Immobilization of the converter enables RuvB to convert the ATP-contained energy into a lever motion, pulling 2 nucleotides of DNA out of the RuvA tetramer per ATP hydrolyzed, thus driving DNA branch migration. The RuvB motors rotate together with the DNA substrate, which together with the progressing nucleotide cycle form the mechanistic basis for DNA recombination by continuous HJ branch migration. Branch migration allows RuvC to scan DNA until it finds its consensus sequence, where it cleaves and resolves cruciform DNA. The sequence is that of Holliday junction branch migration complex subunit RuvB from Shewanella sp. (strain MR-4).